A 916-amino-acid chain; its full sequence is DNA topoisomerase 1 alpha (916 aa).

Residues 1–369 (MGTETVSKPV…SSPSSGDGQK (369 aa)) are disordered. Residues 34–47 (SNSNQSKSNSQRSK) are compositionally biased toward low complexity. A compositionally biased stretch (polar residues) spans 60–76 (PVTSPNGTTPSNKTSIV). Residues 77-93 (KSSMPSSSSKASPAKSP) are compositionally biased toward low complexity. Over residues 102-119 (VKDRSQLQKDQSECKIEH) the composition is skewed to basic and acidic residues. Polar residues predominate over residues 130-148 (SILSGNKGPTSSRQVSSPQ). Residues 149 to 168 (PEKKNNGDRPLDRASRIIKD) show a composition bias toward basic and acidic residues. S170 bears the Phosphoserine mark. Residues 230–239 (KNSSADQSSL) are compositionally biased toward polar residues. Residues 253-267 (MKQDSVKKEIDDKGR) are compositionally biased toward basic and acidic residues. Residues 285-294 (GTDDDDDDDV) show a composition bias toward acidic residues. T286 is subject to Phosphothreonine. The segment covering 354-366 (YSTSSKSSPSSGD) has biased composition (low complexity). 3 interaction with DNA regions span residues 577–578 (KY), 640–645 (RAGNEK), and 731–733 (TAK). In terms of domain architecture, Topo IB-type catalytic spans 584-914 (GSSLKGLSDK…MDVEPEYRFS (331 aa)). Residues 778-860 (QRTVSKTHGA…ERDMHTKEDL (83 aa)) are a coiled coil. Y872 acts as the O-(3'-phospho-DNA)-tyrosine intermediate in catalysis.

The protein belongs to the type IB topoisomerase family. As to quaternary structure, interacts with DEK3. Expressed in inflorescence meristems. Expressed in primordia of sepals, petals, stamens, carpels and ovules. Expressed in midstage embryos.

It is found in the nucleus. The catalysed reaction is ATP-independent breakage of single-stranded DNA, followed by passage and rejoining.. Its function is as follows. Releases the supercoiling and torsional tension of DNA introduced during the DNA replication and transcription by transiently cleaving and rejoining one strand of the DNA duplex. Introduces a single-strand break via transesterification at a target site in duplex DNA. The scissile phosphodiester is attacked by the catalytic tyrosine of the enzyme, resulting in the formation of a DNA-(3'-phosphotyrosyl)-enzyme intermediate and the expulsion of a 5'-OH DNA strand. The free DNA strand then rotates around the intact phosphodiester bond on the opposing strand, thus removing DNA supercoils. Finally, in the religation step, the DNA 5'-OH attacks the covalent intermediate to expel the active-site tyrosine and restore the DNA phosphodiester backbone. Can complement a TOP1-deficient yeast mutant. Plays a critical role in the maintenance of a regular pattern of organ initiation. Topoisomerases I enzymes (TOP1A and TOP1B) are essential for plant survival. Functions together with the stem cell maintenance gene WUSCHEL (WUS) in stem cell regulation. Required to maintain developmentally regulated gene repression. Functions synergistically with chromatin remodeling factors. Is required for the repression of WUS expression in flower development. Plays a role in polycomb group (PcG) protein-mediated histone H3 trimethylation on 'Lys-27' (H3K27me3) at the WUS gene locus. H3K27me3 induces transcriptional repression of WUS. May assist AGAMOUS (AG) in recruiting PcG proteins to WUS locus. Reduces nucleosome density, especially at genes that are targets of PcG proteins. Plays a role in epigenetic silencing. Involved in RNA-directed DNA methylation (RdDM) by promoting Pol V transcription to generate long non-coding RNA transcripts. Is dispensable for Pol IV-mediated small interfering RNA (siRNA) biogenesis. Promotes transposable element (TE) silencing at endogenous RdDM target loci through histone H3 dimethylation of 'Lys-9' (H3K9me2). Promotes the production of Pol V-dependent long non-coding transcripts that facilitate the recruitment of siRNA-AGO4 and AGO4 occupancy at TEs. The polypeptide is DNA topoisomerase 1 alpha (Arabidopsis thaliana (Mouse-ear cress)).